A 151-amino-acid polypeptide reads, in one-letter code: MKHSKNQIVYITFFIIILIVVKPIESVEWNDCSDPNDSFKIEKLEFSPEQPIAGQDLIISISGYLNKEITNGEAYLSITFDRIPIIKLKGNLCNGMGVTCPIQQGNYSTTTINQEIPENAPQGYYYVNFVLYDQDDLQITCIDVQMNITQS.

The N-terminal stretch at 1–26 is a signal peptide; the sequence is MKHSKNQIVYITFFIIILIVVKPIES.

Belongs to the NPC2 family. In terms of assembly, monomer.

Catalyzes the intermembrane transfer of phosphatidylglycerol and phosphatidylinositol. In Dictyostelium discoideum (Social amoeba), this protein is Putative phosphatidylglycerol/phosphatidylinositol transfer protein 1.